A 439-amino-acid chain; its full sequence is Chitinase-like protein Idgf1 (439 aa).

An N-terminal signal peptide occupies residues 1-20 (MRFQLFYILGLLSVTSLTQA). A GH18 domain is found at 22-439 (NNLVCYYDST…IVRSIKYFMG (418 aa)). Cys-26 and Cys-53 are oxidised to a cystine. Residues Asn-122, Asn-218, and Asn-346 are each glycosylated (N-linked (GlcNAc...) asparagine). A disulfide bond links Cys-340 and Cys-423.

The protein belongs to the glycosyl hydrolase 18 family. IDGF subfamily. Post-translationally, glycosylated.

It is found in the secreted. Cooperates with insulin-like peptides to stimulate the proliferation, polarization and motility of imaginal disk cells. May act by stabilizing the binding of insulin-like peptides to its receptor through a simultaneous interaction with both molecules to form a multiprotein signaling complex. This is Chitinase-like protein Idgf1 (Idgf1) from Drosophila simulans (Fruit fly).